Consider the following 23-residue polypeptide: Fimbrial protein (23 aa).

The cysteines at positions 8 and 21 are disulfide-linked.

Belongs to the N-Me-Phe pilin family. In terms of assembly, the pili are polar flexible filaments of about 5.4 nanometers diameter and 2.5 micrometers average length; they consist of only a single polypeptide chain arranged in a helical configuration of five subunits per turn in the assembled pilus.

It localises to the fimbrium. This Pseudomonas aeruginosa protein is Fimbrial protein (pil).